A 330-amino-acid polypeptide reads, in one-letter code: Beta-1,6-galactofuranosyltransferase WbbI (330 aa).

The protein resides in the cytoplasm. The protein operates within bacterial outer membrane biogenesis; lipopolysaccharide biosynthesis. Its function is as follows. Involved in the transfer of galactofuranose (Galf) onto an alpha-D-gluco-configured acceptor substrate to form a beta-1,6-linkage. It uses n-octyl alpha-D-glucopyranoside as an acceptor substrate for the addition of galactofuranose from the donor substrate UDP-galactofuranose. It is not able to use beta-D-glucopyranoside isomers. The sequence is that of Beta-1,6-galactofuranosyltransferase WbbI (wbbI) from Escherichia coli (strain K12).